Consider the following 216-residue polypeptide: MGNRDDEYDYLFKVVLIGDSGVGKSNLLSRFTRNEFNLESKSTIGVEFATRSIQVDGKTIKAQIWDTAGQERYRAITSAYYRGAVGALLVYDIAKHLTYENVERWLKELRDHADSNIVIMLVGNKSDLRHLRAVPTDEARAFAEKNGLSFIETSALDSTNVEAAFQTILTEIYRIVSQKQMSDRRENDMSPSNNVVPIHVPPTTENKPKMQCCQNI.

Glycine 2 carries the post-translational modification N-acetylglycine. Residues serine 20, glycine 21, valine 22, glycine 23, lysine 24, serine 25, asparagine 26, asparagine 37, leucine 38, serine 40, serine 42, and threonine 43 each coordinate GTP. Serine 25 provides a ligand contact to Mg(2+). A Switch 1 motif is present at residues 36–47 (FNLESKSTIGVE). 2 residues coordinate Mg(2+): threonine 43 and aspartate 66. Positions 67-86 (TAGQERYRAITSAYYRGAVG) match the Switch 2 motif. The GTP site is built by glycine 69, asparagine 124, lysine 125, aspartate 127, alanine 155, and leucine 156. The disordered stretch occupies residues 183 to 208 (DRRENDMSPSNNVVPIHVPPTTENKP). Residues cysteine 212 and cysteine 213 are each lipidated (S-geranylgeranyl cysteine). Cysteine 213 is subject to Cysteine methyl ester. Residues 214–216 (QNI) constitute a propeptide, removed in mature form.

The protein belongs to the small GTPase superfamily. Rab family. Mg(2+) is required as a cofactor.

It is found in the cell membrane. It localises to the endosome membrane. The protein resides in the recycling endosome membrane. Its subcellular location is the cleavage furrow. The protein localises to the cytoplasmic vesicle. It is found in the phagosome. It localises to the cytoplasmic vesicle membrane. The protein resides in the golgi apparatus. Its subcellular location is the trans-Golgi network. It carries out the reaction GTP + H2O = GDP + phosphate + H(+). With respect to regulation, regulated by guanine nucleotide exchange factors (GEFs) which promote the exchange of bound GDP for free GTP. Regulated by GTPase activating proteins (GAPs) which increase the GTP hydrolysis activity. Inhibited by GDP dissociation inhibitors (GDIs) which prevent Rab-GDP dissociation. Its function is as follows. The small GTPases Rab are key regulators of intracellular membrane trafficking, from the formation of transport vesicles to their fusion with membranes. Rabs cycle between an inactive GDP-bound form and an active GTP-bound form that is able to recruit to membranes different set of downstream effectors directly responsible for vesicle formation, movement, tethering and fusion. The small Rab GTPase RAB11A regulates endocytic recycling. May also be involved in the regulation of preciliary trafficking and neosynthesized protein export. This chain is Ras-related protein Rab-11A (RAB11A), found in Gallus gallus (Chicken).